We begin with the raw amino-acid sequence, 52 residues long: Insulin (52 aa).

Cystine bridges form between C9–C38, C21–C51, and C37–C42.

The protein belongs to the insulin family. In terms of assembly, heterodimer of a B chain and an A chain linked by two disulfide bonds.

It localises to the secreted. In terms of biological role, insulin decreases blood glucose concentration. It increases cell permeability to monosaccharides, amino acids and fatty acids. It accelerates glycolysis, the pentose phosphate cycle, and glycogen synthesis in liver. The protein is Insulin (ins) of Piaractus mesopotamicus (Small-scaled pacu).